The sequence spans 172 residues: Ribosome maturation factor RimP (172 aa).

It belongs to the RimP family.

It localises to the cytoplasm. In terms of biological role, required for maturation of 30S ribosomal subunits. The polypeptide is Ribosome maturation factor RimP (Nitratidesulfovibrio vulgaris (strain ATCC 29579 / DSM 644 / CCUG 34227 / NCIMB 8303 / VKM B-1760 / Hildenborough) (Desulfovibrio vulgaris)).